Reading from the N-terminus, the 555-residue chain is Hydrogenase-4 component G (555 aa).

This sequence belongs to the complex I 49 kDa subunit family. The cofactor is [4Fe-4S] cluster.

Its function is as follows. Possible component of hydrogenase 4. In Escherichia coli (strain K12), this protein is Hydrogenase-4 component G.